We begin with the raw amino-acid sequence, 77 residues long: Translation initiation factor IF-1, chloroplastic (77 aa).

The 72-residue stretch at 1–72 (MKKQNLIEME…TKGRITYRLR (72 aa)) folds into the S1-like domain.

Belongs to the IF-1 family. In terms of assembly, component of the 30S ribosomal translation pre-initiation complex which assembles on the 30S ribosome in the order IF-2 and IF-3, IF-1 and N-formylmethionyl-tRNA(fMet); mRNA recruitment can occur at any time during PIC assembly.

Its subcellular location is the plastid. It is found in the chloroplast. Its function is as follows. One of the essential components for the initiation of protein synthesis. Stabilizes the binding of IF-2 and IF-3 on the 30S subunit to which N-formylmethionyl-tRNA(fMet) subsequently binds. Helps modulate mRNA selection, yielding the 30S pre-initiation complex (PIC). Upon addition of the 50S ribosomal subunit IF-1, IF-2 and IF-3 are released leaving the mature 70S translation initiation complex. This is Translation initiation factor IF-1, chloroplastic from Zygnema circumcarinatum (Green alga).